Here is a 536-residue protein sequence, read N- to C-terminus: MFS-type efflux pump MFS1 (536 aa).

The next 3 membrane-spanning stretches (helical) occupy residues 30-50, 80-100, and 102-122; these read VTGL…LLVA, YLLT…FFPV, and WVFL…GAAP. N-linked (GlcNAc...) asparagine glycosylation occurs at Asn-123. 3 helical membrane passes run 133–153, 163–183, and 191–211; these read VAGI…AYSI, GAIG…GGAF, and WCFY…LIFL. An N-linked (GlcNAc...) asparagine glycan is attached at Asn-221. Helical transmembrane passes span 234-254, 264-284, 306-326, 342-362, 366-386, 400-420, 426-446, and 503-523; these read IGTA…QWGG, IIAL…FQIR, FFLF…PIWF, IPMV…VTAI, APLY…LTTF, IIFG…AQAV, VAVG…LFVS, and TWYV…GMEW.

Belongs to the major facilitator superfamily. TCR/Tet family.

It localises to the cell membrane. Functionally, MFS-type efflux pump involved in the modulation susceptibility to azoles, including fluconazole, itraconazole, ketoconazole, miconazole and voriconazole. Confers also increased resistance chloramphenicol and thiamphenicol, suggesting that it acts as a pleiotropic drug transporter with a broad substrate spectrum. Finally, increases the tolerance to cycloheximide when expressed in S.cerevisiae, but not in dermatophyte species. This chain is MFS-type efflux pump MFS1, found in Trichophyton rubrum (strain ATCC MYA-4607 / CBS 118892) (Athlete's foot fungus).